A 365-amino-acid chain; its full sequence is DNA polymerase IV 1 (365 aa).

The 191-residue stretch at Val-6–Gly-196 folds into the UmuC domain. Mg(2+)-binding residues include Asp-10 and Asp-113. The active site involves Glu-114.

Belongs to the DNA polymerase type-Y family. In terms of assembly, monomer. Mg(2+) serves as cofactor.

It localises to the cytoplasm. The catalysed reaction is DNA(n) + a 2'-deoxyribonucleoside 5'-triphosphate = DNA(n+1) + diphosphate. Functionally, poorly processive, error-prone DNA polymerase involved in untargeted mutagenesis. Copies undamaged DNA at stalled replication forks, which arise in vivo from mismatched or misaligned primer ends. These misaligned primers can be extended by PolIV. Exhibits no 3'-5' exonuclease (proofreading) activity. May be involved in translesional synthesis. This Methanosarcina mazei (strain ATCC BAA-159 / DSM 3647 / Goe1 / Go1 / JCM 11833 / OCM 88) (Methanosarcina frisia) protein is DNA polymerase IV 1 (dbh1).